The primary structure comprises 344 residues: Methionine import ATP-binding protein MetN (344 aa).

The ABC transporter domain maps to 2–241 (IEINQVNKVF…PKTELAHDFI (240 aa)). 38 to 45 (GSSGAGKS) contributes to the ATP binding site.

It belongs to the ABC transporter superfamily. Methionine importer (TC 3.A.1.24) family. As to quaternary structure, the complex is composed of two ATP-binding proteins (MetN), two transmembrane proteins (MetI) and a solute-binding protein (MetQ).

The protein resides in the cell inner membrane. The catalysed reaction is L-methionine(out) + ATP + H2O = L-methionine(in) + ADP + phosphate + H(+). The enzyme catalyses D-methionine(out) + ATP + H2O = D-methionine(in) + ADP + phosphate + H(+). Functionally, part of the ABC transporter complex MetNIQ involved in methionine import. Responsible for energy coupling to the transport system. The polypeptide is Methionine import ATP-binding protein MetN (Vibrio vulnificus (strain CMCP6)).